We begin with the raw amino-acid sequence, 96 residues long: UPF0235 protein YggU (96 aa).

It belongs to the UPF0235 family.

The polypeptide is UPF0235 protein YggU (Salmonella typhimurium (strain LT2 / SGSC1412 / ATCC 700720)).